Consider the following 348-residue polypeptide: [LysW]-L-2-aminoadipate 6-phosphate reductase (348 aa).

Position 14–17 (14–17) interacts with NADP(+); it reads SGYA. C151 is an active-site residue. N315 provides a ligand contact to NADP(+).

It belongs to the NAGSA dehydrogenase family. Type 1 subfamily. LysY sub-subfamily.

It is found in the cytoplasm. It catalyses the reaction [amino-group carrier protein]-C-terminal-N-(1-carboxy-5-oxopentan-1-yl)-L-glutamine + phosphate + NADP(+) = [amino-group carrier protein]-C-terminal-N-(1-carboxy-5-phosphooxy-5-oxopentan-1-yl)-L-glutamine + NADPH + H(+). It participates in amino-acid biosynthesis; L-lysine biosynthesis via AAA pathway; L-lysine from L-alpha-aminoadipate (Thermus route): step 3/5. Catalyzes the NADPH-dependent reduction of [LysW]-aminoadipate 6-phosphate to yield [LysW]-aminoadipate 6-semialdehyde. In Deinococcus radiodurans (strain ATCC 13939 / DSM 20539 / JCM 16871 / CCUG 27074 / LMG 4051 / NBRC 15346 / NCIMB 9279 / VKM B-1422 / R1), this protein is [LysW]-L-2-aminoadipate 6-phosphate reductase.